Consider the following 710-residue polypeptide: MSDSPTSSPPAPSADSAPPPDTSSDGSAAPPPTDSAPPPSPPADSSPPPALPSLPPAVFSPPPTVSSPPPPPLDSSPPPPPDLTPPPSSPPPPDAPPPIPIVFPPPIDSPPPESTNSPPPPEVFEPPPPPADEDESPPAPPPPEQLPPPASSPQGGPKKPKKHHPGPATSPPAPSAPATSPPAPPNAPPRNSSHALPPKSTAAGGPLTSPSRGVPSSGNSVPPPANSGGGYQGKTMAGFAIAGFAVIALMAVVFLVRRKKKRNIDAYSDSQYLPPSNFSIKSDGFLYGQNPTKGYSGPGGYNSQQQSNSGNSFGSQRGGGGYTRSGSAPDSAVMGSGQTHFTYEELTDITEGFSKHNILGEGGFGCVYKGKLNDGKLVAVKQLKVGSGQGDREFKAEVEIISRVHHRHLVSLVGYCIADSERLLIYEYVPNQTLEHHLHGKGRPVLEWARRVRIAIGSAKGLAYLHEDCHPKIIHRDIKSANILLDDEFEAQVADFGLAKLNDSTQTHVSTRVMGTFGYLAPEYAQSGKLTDRSDVFSFGVVLLELITGRKPVDQYQPLGEESLVEWARPLLHKAIETGDFSELVDRRLEKHYVENEVFRMIETAAACVRHSGPKRPRMVQVVRALDSEGDMGDISNGNKVGQSSAYDSGQYNNDTMKFRKMAFGFDDSSDSGMYSGDYSVQDSRKGSNGASSEFTRNETENRNFNNRRY.

The interval 1–229 is disordered; that stretch reads MSDSPTSSPP…SVPPPANSGG (229 aa). The Extracellular portion of the chain corresponds to 1–235; that stretch reads MSDSPTSSPP…NSGGGYQGKT (235 aa). Pro residues-rich tracts occupy residues 7-21, 29-130, 137-151, and 168-188; these read SSPP…PPPD, APPP…PPPP, PPAP…PPAS, and ATSP…PNAP. An N-linked (GlcNAc...) asparagine glycan is attached at Asn191. The segment covering 209–220 has biased composition (low complexity); sequence SPSRGVPSSGNS. A helical transmembrane segment spans residues 236–256; that stretch reads MAGFAIAGFAVIALMAVVFLV. The Cytoplasmic portion of the chain corresponds to 257 to 710; that stretch reads RRKKKRNIDA…ENRNFNNRRY (454 aa). Residues 289–334 form a disordered region; the sequence is QNPTKGYSGPGGYNSQQQSNSGNSFGSQRGGGGYTRSGSAPDSAVM. A compositionally biased stretch (low complexity) spans 301-315; it reads YNSQQQSNSGNSFGS. At Thr342 the chain carries Phosphothreonine. The Protein kinase domain maps to 353-619; that stretch reads FSKHNILGEG…RHSGPKRPRM (267 aa). Residues 359–367 and Lys381 each bind ATP; that span reads LGEGGFGCV. Tyr426 carries the phosphotyrosine modification. Catalysis depends on Asp477, which acts as the Proton acceptor. Position 510 is a phosphoserine (Ser510). Phosphothreonine is present on residues Thr511 and Thr516. Tyr524 is subject to Phosphotyrosine. Residues 676–710 are disordered; the sequence is SGDYSVQDSRKGSNGASSEFTRNETENRNFNNRRY.

This sequence belongs to the protein kinase superfamily. Ser/Thr protein kinase family. As to quaternary structure, interacts with KIPK1 and KIPK2 (via its cytosolic domain). Mostly expressed in roots, especially in root hairs.

The protein resides in the cell membrane. The catalysed reaction is L-seryl-[protein] + ATP = O-phospho-L-seryl-[protein] + ADP + H(+). It carries out the reaction L-threonyl-[protein] + ATP = O-phospho-L-threonyl-[protein] + ADP + H(+). Negatively regulates root hair elongation. This chain is Proline-rich receptor-like protein kinase PERK13 (PERK13), found in Arabidopsis thaliana (Mouse-ear cress).